A 245-amino-acid chain; its full sequence is tRNA pseudouridine synthase A 2 (245 aa).

D53 serves as the catalytic Nucleophile. Substrate is bound at residue Y111.

The protein belongs to the tRNA pseudouridine synthase TruA family. Homodimer.

The catalysed reaction is uridine(38/39/40) in tRNA = pseudouridine(38/39/40) in tRNA. Functionally, formation of pseudouridine at positions 38, 39 and 40 in the anticodon stem and loop of transfer RNAs. The protein is tRNA pseudouridine synthase A 2 of Bacillus anthracis.